Reading from the N-terminus, the 261-residue chain is tRNA pseudouridine synthase A (261 aa).

Asp51 serves as the catalytic Nucleophile. Tyr109 lines the substrate pocket.

Belongs to the tRNA pseudouridine synthase TruA family. In terms of assembly, homodimer.

It carries out the reaction uridine(38/39/40) in tRNA = pseudouridine(38/39/40) in tRNA. Its function is as follows. Formation of pseudouridine at positions 38, 39 and 40 in the anticodon stem and loop of transfer RNAs. The protein is tRNA pseudouridine synthase A of Shewanella amazonensis (strain ATCC BAA-1098 / SB2B).